A 522-amino-acid polypeptide reads, in one-letter code: Protein nucleotidyltransferase YdiU (522 aa).

8 residues coordinate ATP: glycine 101, glycine 103, arginine 104, lysine 123, aspartate 135, glycine 136, arginine 193, and arginine 200. Aspartate 270 (proton acceptor) is an active-site residue. Residues asparagine 271 and aspartate 280 each coordinate Mg(2+). Aspartate 280 contributes to the ATP binding site.

The protein belongs to the SELO family. It depends on Mg(2+) as a cofactor. Mn(2+) is required as a cofactor.

The catalysed reaction is L-seryl-[protein] + ATP = 3-O-(5'-adenylyl)-L-seryl-[protein] + diphosphate. The enzyme catalyses L-threonyl-[protein] + ATP = 3-O-(5'-adenylyl)-L-threonyl-[protein] + diphosphate. It catalyses the reaction L-tyrosyl-[protein] + ATP = O-(5'-adenylyl)-L-tyrosyl-[protein] + diphosphate. It carries out the reaction L-histidyl-[protein] + UTP = N(tele)-(5'-uridylyl)-L-histidyl-[protein] + diphosphate. The catalysed reaction is L-seryl-[protein] + UTP = O-(5'-uridylyl)-L-seryl-[protein] + diphosphate. The enzyme catalyses L-tyrosyl-[protein] + UTP = O-(5'-uridylyl)-L-tyrosyl-[protein] + diphosphate. Nucleotidyltransferase involved in the post-translational modification of proteins. It can catalyze the addition of adenosine monophosphate (AMP) or uridine monophosphate (UMP) to a protein, resulting in modifications known as AMPylation and UMPylation. This Flavobacterium johnsoniae (strain ATCC 17061 / DSM 2064 / JCM 8514 / BCRC 14874 / CCUG 350202 / NBRC 14942 / NCIMB 11054 / UW101) (Cytophaga johnsonae) protein is Protein nucleotidyltransferase YdiU.